A 251-amino-acid chain; its full sequence is Derlin-1 (251 aa).

Ser2 is subject to N-acetylserine. Topologically, residues 2-15 (SDIGDWFRSIPAIT) are cytoplasmic. The chain crosses the membrane as a helical span at residues 16 to 31 (RYWFAATVAVPLVGKL). Topologically, residues 32 to 69 (GLISPAYLFLWPEAFLYRFQIWRPITATFYFPVGPGTG) are lumenal. The helical transmembrane segment at 70-89 (FLYLVNLYFLYQYSTRLETG) threads the bilayer. Over 90-94 (AFDGR) the chain is Cytoplasmic. Residues 95-115 (PADYLFMLLFNWICIVITGLA) traverse the membrane as a helical segment. Residues 116 to 122 (MDMQLLM) lie on the Lumenal side of the membrane. A helical membrane pass occupies residues 123-137 (IPLIMSVLYVWAQLN). At 138–154 (RDMIVSFWFGTRFKACY) the chain is on the cytoplasmic side. Residues 155-166 (LPWVILGFNYII) form a helical membrane-spanning segment. The Lumenal segment spans residues 167 to 170 (GGSV). Residues 171–189 (INELIGNLVGHLYFFLMFR) traverse the membrane as a helical segment. Topologically, residues 190 to 251 (YPMDLGGRNF…WGQGFRLGDQ (62 aa)) are cytoplasmic. The residue at position 201 (Ser201) is a Phosphoserine. Thr202 carries the post-translational modification Phosphothreonine. At Ser226 the chain carries Phosphoserine. The segment at 229–251 (RAADQNGGGGRHNWGQGFRLGDQ) is disordered. The SHP-box motif lies at 241 to 248 (NWGQGFRL).

This sequence belongs to the derlin family. Homotetramer. The four subunits of the tetramer are arranged in a twofold symmetry. Forms heterooligomers with DERL2 and DERL3; binding to DERL3 is poorer than that between DERL2 and DERL3. Interacts (via SHP-box motif) with VCP. Interacts with AMFR, SELENOS, SEL1L, SELENOK and SYVN1, as well as with SEL1L-SYVN1 and VCP-SELENOS protein complexes; this interaction is weaker than that observed between DERL2 and these complexes. Interacts with NGLY1 and YOD1. Does not bind to EDEM1. Interacts with DNAJB9. Interacts with RNF103. Interacts with HM13. Interacts with XBP1 isoform 1 (via luminal/ectodomain domain); the interaction obviates the need for ectodomain shedding prior HM13/SPP-mediated XBP1 isoform 1 cleavage. Interacts with the signal recognition particle/SRP and the SRP receptor; in the process of endoplasmic reticulum stress-induced pre-emptive quality control. May interact with UBXN6. Interacts with ZFAND2B; probably through VCP. Interacts with CCDC47. Interacts with C18orf32. May interact with TRAM1. Forms a complex with SVIP and VCP/p97. As to quaternary structure, (Microbial infection) Interacts with the cytomegalovirus US11 protein. In terms of tissue distribution, ubiquitous.

It is found in the endoplasmic reticulum membrane. Functional component of endoplasmic reticulum-associated degradation (ERAD) for misfolded lumenal proteins. Forms homotetramers which encircle a large channel traversing the endoplasmic reticulum (ER) membrane. This allows the retrotranslocation of misfolded proteins from the ER into the cytosol where they are ubiquitinated and degraded by the proteasome. The channel has a lateral gate within the membrane which provides direct access to membrane proteins with no need to reenter the ER lumen first. May mediate the interaction between VCP and the misfolded protein. Also involved in endoplasmic reticulum stress-induced pre-emptive quality control, a mechanism that selectively attenuates the translocation of newly synthesized proteins into the endoplasmic reticulum and reroutes them to the cytosol for proteasomal degradation. By controlling the steady-state expression of the IGF1R receptor, indirectly regulates the insulin-like growth factor receptor signaling pathway. In terms of biological role, (Microbial infection) In case of infection by cytomegaloviruses, it plays a central role in the export from the ER and subsequent degradation of MHC class I heavy chains via its interaction with US11 viral protein, which recognizes and associates with MHC class I heavy chains. Also participates in the degradation process of misfolded cytomegalovirus US2 protein. The polypeptide is Derlin-1 (Homo sapiens (Human)).